The primary structure comprises 301 residues: Cytosolic sulfotransferase 3 (301 aa).

Residue Lys53–Trp58 participates in 3'-phosphoadenylyl sulfate binding. The active-site Proton acceptor is the His115. 3'-phosphoadenylyl sulfate contacts are provided by residues Arg137, Ser145, Tyr201, Val235–Met240, and Arg263–Gly265.

It belongs to the sulfotransferase 1 family.

The protein localises to the cytoplasm. Inhibited by Hg(2+), Co(2+), Zn(2+), Cd(2+), Cu(2+) and Pb(2+) ions. Activated slightly by Mn(2+), Ca(2+) and Mg(2+) ions. Sulfotransferase that utilizes 3'-phospho-5'-adenylyl sulfate (PAPS) as sulfonate donor to catalyze the sulfate conjugation of a variety of xenobiotic and endogenous compounds, including dopamine, T3 (triiodo-L-thyronine), T4 (thyroxine), estrone, DHEA (dehydroepiandrosterone), flavonoids, isoflavonoids and other phenolic compounds. The chain is Cytosolic sulfotransferase 3 from Danio rerio (Zebrafish).